We begin with the raw amino-acid sequence, 440 residues long: Muscarinic acetylcholine receptor M2 (440 aa).

Residues 1–19 form a helical membrane-spanning segment; it reads VLVAGSLSLVTIIGNILVM. Topologically, residues 20-33 are cytoplasmic; sequence VSIKVNRHLQTVNN. The chain crosses the membrane as a helical span at residues 34-54; the sequence is YFLFSLACADLIIGVFSMNLY. At 55–71 the chain is on the extracellular side; that stretch reads TLYTVIGYWPLGPVVCD. Cys-70 and Cys-150 are joined by a disulfide. The helical transmembrane segment at 72 to 93 threads the bilayer; that stretch reads LWLALDYVVSNASVMNLLIISF. The Important for signaling signature appears at 94 to 96; it reads DRY. Residues 94 to 113 lie on the Cytoplasmic side of the membrane; it reads DRYFCVTKPLTYPVKRTTKM. Residues 114–136 traverse the membrane as a helical segment; sequence AGMMIAAAWVLSFILWAPAILFW. The Extracellular portion of the chain corresponds to 137–158; that stretch reads QFIVGVRTVEDGECYIQFFSNA. Residues 159-183 traverse the membrane as a helical segment; the sequence is AVTFGTAIAAFYLPVIIMTVLYWHI. Residues 184-361 lie on the Cytoplasmic side of the membrane; sequence SRASKSRIKK…PPSREKKVTR (178 aa). The segment at 192–329 is disordered; that stretch reads KKDKKEPVAN…VVGSSGQNGD (138 aa). Ser-206 is modified (phosphoserine). Residues 228–244 are compositionally biased toward basic and acidic residues; that stretch reads GLEHNKIQNGKAPRDPV. Polar residues-rich tracts occupy residues 258 to 267, 278 to 287, and 308 to 327; these read NDSTSVSAVA, DENTVSTSLG, and SDSCTPTNTTVEVVGSSGQN. Residues 362–384 form a helical membrane-spanning segment; sequence TILAILLAFIITWAPYNVMVLIN. The Extracellular segment spans residues 385 to 392; the sequence is TFCAPCIP. A disulfide bridge connects residues Cys-387 and Cys-390. A helical transmembrane segment spans residues 393 to 416; sequence NTVWTIGYWLCYINSTINPACYAL. Positions 410–414 match the Important for signaling motif; sequence NPACY. Residues 417 to 440 lie on the Cytoplasmic side of the membrane; that stretch reads CNATFKKTFKHLLMCHYKNIGATR. Thr-420, Thr-424, and Thr-439 each carry phosphothreonine.

The protein belongs to the G-protein coupled receptor 1 family. Muscarinic acetylcholine receptor subfamily. CHRM2 sub-subfamily. As to quaternary structure, interacts with ARRB1 and ARRB2. Interacts with RACK1; the interaction regulates CHRM2 internalization. Post-translationally, phosphorylated in response to agonist treatment.

The protein localises to the cell membrane. The protein resides in the postsynaptic cell membrane. In terms of biological role, the muscarinic acetylcholine receptor mediates various cellular responses, including inhibition of adenylate cyclase, breakdown of phosphoinositides and modulation of potassium channels through the action of G proteins. Primary transducing effect is adenylate cyclase inhibition. Signaling promotes phospholipase C activity, leading to the release of inositol trisphosphate (IP3); this then triggers calcium ion release into the cytosol. This is Muscarinic acetylcholine receptor M2 (CHRM2) from Pan troglodytes (Chimpanzee).